The chain runs to 222 residues: uncharacterized protein (222 aa).

This is an uncharacterized protein from Fowlpox virus (strain NVSL) (FPV).